We begin with the raw amino-acid sequence, 1437 residues long: Histone-lysine N-methyltransferase NSD3 (1437 aa).

Disordered regions lie at residues Pro121–Ile157 and Gln181–Pro252. Residues Pro128 to Val139 show a composition bias toward pro residues. Phosphoserine is present on Ser150. The short motif at Lys154–Ile157 is the KIKL element. Positions Lys187–Asn201 are enriched in basic residues. Residues Lys202–Ala248 are compositionally biased toward basic and acidic residues. Glycyl lysine isopeptide (Lys-Gly) (interchain with G-Cter in SUMO2) cross-links involve residues Lys218 and Lys245. Residues Val270–His333 form the PWWP 1 domain. Disordered regions lie at residues Thr344 to Arg365 and Ala406 to Pro465. Lys413 is covalently cross-linked (Glycyl lysine isopeptide (Lys-Gly) (interchain with G-Cter in SUMO2)). Residues Val425 to Thr445 show a composition bias toward polar residues. Position 457 is a phosphoserine (Ser457). Residues Lys502 and Lys532 each participate in a glycyl lysine isopeptide (Lys-Gly) (interchain with G-Cter in SUMO2) cross-link. Positions Gln540–Gly696 are disordered. The segment covering Ser546–Ser571 has biased composition (polar residues). Residues Thr583–Pro595 show a composition bias toward basic and acidic residues. Residues Ser585, Ser587, and Ser590 each carry the phosphoserine modification. Residue Lys628 forms a Glycyl lysine isopeptide (Lys-Gly) (interchain with G-Cter in SUMO2) linkage. At Ser655 the chain carries Phosphoserine. Over residues Asp682–Arg692 the composition is skewed to polar residues. PHD-type zinc fingers lie at residues Asp701 to Gly748, Gln749 to Glu805, and Val862 to Gly955. An N6-acetyllysine modification is found at Lys790. One can recognise a PWWP 2 domain in the interval Tyr960–Gly1022. Residues Ile1033–Lys1069 adopt a coiled-coil conformation. One can recognise an AWS domain in the interval Ser1093 to Leu1143. One can recognise an SET domain in the interval Pro1145–Asn1262. A Glycyl lysine isopeptide (Lys-Gly) (interchain with G-Cter in SUMO2) cross-link involves residue Lys1151. Positions Gly1269 to Gly1285 constitute a Post-SET domain. The PHD-type 4; atypical zinc finger occupies Glu1321–Asp1368.

Belongs to the class V-like SAM-binding methyltransferase superfamily. Histone-lysine methyltransferase family. SET2 subfamily. Interacts with BRD4. Interacts (via KIKL motif) with BRD3 (via NET domain). As to expression, highly expressed in brain, heart and skeletal muscle. Expressed at lower level in liver and lung.

The protein resides in the nucleus. It localises to the chromosome. It catalyses the reaction L-lysyl(4)-[histone H3] + 2 S-adenosyl-L-methionine = N(6),N(6)-dimethyl-L-lysyl(4)-[histone H3] + 2 S-adenosyl-L-homocysteine + 2 H(+). The enzyme catalyses L-lysyl(27)-[histone H3] + 2 S-adenosyl-L-methionine = N(6),N(6)-dimethyl-L-lysyl(27)-[histone H3] + 2 S-adenosyl-L-homocysteine + 2 H(+). Histone methyltransferase. Preferentially dimethylates 'Lys-4' and 'Lys-27' of histone H3 forming H3K4me2 and H3K27me2. H3 'Lys-4' methylation represents a specific tag for epigenetic transcriptional activation, while 'Lys-27' is a mark for transcriptional repression. This chain is Histone-lysine N-methyltransferase NSD3, found in Homo sapiens (Human).